Reading from the N-terminus, the 753-residue chain is Ribosome biogenesis protein BOP1 homolog (753 aa).

The segment at 1-155 (MTKRSKGANE…RNTVGNVPLK (155 aa)) is disordered. Composition is skewed to basic and acidic residues over residues 7-18 (GANEDKLIETKS) and 30-41 (KPVEAESLKEED). Composition is skewed to acidic residues over residues 64–75 (DDFDSDFSDSED) and 83–109 (EDGDVEFSDDDDVLEHDGSIDNEDDDG). Positions 110–121 (SEHVGSDNNEEH) are enriched in basic and acidic residues. Residues 122-142 (GSDEDSERGEAVEESDSSEDE) are compositionally biased toward acidic residues. WD repeat units follow at residues 421-462 (GHTG…KVWQ), 464-502 (DEAIMCVAWNPLSRLPVLAVAMGRDLFFLNTELGTDEEQ), 539-581 (RHFK…TQRL), 626-665 (TGLREISSMAIHPGGDNLIVGSKEGKMCWFDMDLSSKPYK), 669-708 (NHPKDITNVAVHRSYPLFASCSEDSTAYVFHGMVYNDLNQ), and 722-753 (SSKGGVLDCKFHPRQPWLFTAGADSIIKLYCH).

Belongs to the WD repeat BOP1/ERB1 family. Interacts with PES. Interacts with WDR12.

It localises to the nucleus. The protein resides in the nucleolus. The protein localises to the nucleoplasm. In terms of biological role, required for maturation of ribosomal RNAs and formation of the large ribosomal subunit. Plays an essential role in cell growth and survival through its regulation of ribosome biogenesis and mitotic progression. In Arabidopsis thaliana (Mouse-ear cress), this protein is Ribosome biogenesis protein BOP1 homolog.